A 513-amino-acid polypeptide reads, in one-letter code: Glutamyl-tRNA(Gln) amidotransferase subunit A (513 aa).

Catalysis depends on charge relay system residues Lys-85 and Ser-160. The Acyl-ester intermediate role is filled by Ser-184.

The protein belongs to the amidase family. GatA subfamily. As to quaternary structure, heterotrimer of A, B and C subunits.

It carries out the reaction L-glutamyl-tRNA(Gln) + L-glutamine + ATP + H2O = L-glutaminyl-tRNA(Gln) + L-glutamate + ADP + phosphate + H(+). In terms of biological role, allows the formation of correctly charged Gln-tRNA(Gln) through the transamidation of misacylated Glu-tRNA(Gln) in organisms which lack glutaminyl-tRNA synthetase. The reaction takes place in the presence of glutamine and ATP through an activated gamma-phospho-Glu-tRNA(Gln). The polypeptide is Glutamyl-tRNA(Gln) amidotransferase subunit A (Bifidobacterium longum subsp. infantis (strain ATCC 15697 / DSM 20088 / JCM 1222 / NCTC 11817 / S12)).